Consider the following 369-residue polypeptide: Dual specificity protein phosphatase 1-A (369 aa).

The Rhodanese domain occupies 21–138; the sequence is RAHKCLILDC…FSAQCPEFCT (118 aa). Position 168 is a phosphothreonine; by MAPK1 (T168). Residues 175–316 form the Tyrosine-protein phosphatase domain; the sequence is GPVEILPFLY…LLQFESQVLA (142 aa). The Phosphocysteine intermediate role is filled by C260.

This sequence belongs to the protein-tyrosine phosphatase family. Non-receptor class dual specificity subfamily. Post-translationally, phosphorylated by MAPK1/ERK2 at Thr-168 and at one or more serine residues in a progesterone-dependent manner. Phosphorylation reduces its rate of degradation but does not seem to affect phosphatase activity. Expressed in XIK-2 kidney cells.

Its subcellular location is the nucleus. The catalysed reaction is O-phospho-L-seryl-[protein] + H2O = L-seryl-[protein] + phosphate. The enzyme catalyses O-phospho-L-threonyl-[protein] + H2O = L-threonyl-[protein] + phosphate. It catalyses the reaction O-phospho-L-tyrosyl-[protein] + H2O = L-tyrosyl-[protein] + phosphate. In terms of biological role, dual specificity phosphatase that dephosphorylates MAP kinase MAPK1/ERK2 on both 'Thr-188' and 'Tyr-190', regulating its activity during the meiotic cell cycle. This chain is Dual specificity protein phosphatase 1-A, found in Xenopus laevis (African clawed frog).